Consider the following 238-residue polypeptide: Ribonuclease 3 (238 aa).

Residues 4–130 (IQTLFQTLNI…LFGAIYLDLG (127 aa)) form the RNase III domain. E45 is a Mg(2+) binding site. D49 is an active-site residue. Mg(2+)-binding residues include D116 and E119. Residue E119 is part of the active site. A DRBM domain is found at 154–222 (DFKTQLQEIV…AQQALSKVAK (69 aa)). The tract at residues 215 to 238 (QALSKVAKPKDLLNNKGGKEKELQ) is disordered. Residues 222-238 (KPKDLLNNKGGKEKELQ) show a composition bias toward basic and acidic residues.

The protein belongs to the ribonuclease III family. In terms of assembly, homodimer. It depends on Mg(2+) as a cofactor.

The protein localises to the cytoplasm. The catalysed reaction is Endonucleolytic cleavage to 5'-phosphomonoester.. Functionally, digests double-stranded RNA. Involved in the processing of primary rRNA transcript to yield the immediate precursors to the large and small rRNAs (23S and 16S). Processes some mRNAs, and tRNAs when they are encoded in the rRNA operon. Processes pre-crRNA and tracrRNA of type II CRISPR loci if present in the organism. The protein is Ribonuclease 3 of Onion yellows phytoplasma (strain OY-M).